Consider the following 375-residue polypeptide: DNA replication and repair protein RecF (375 aa).

Gly30 to Thr37 contacts ATP.

The protein belongs to the RecF family.

The protein resides in the cytoplasm. The RecF protein is involved in DNA metabolism; it is required for DNA replication and normal SOS inducibility. RecF binds preferentially to single-stranded, linear DNA. It also seems to bind ATP. The chain is DNA replication and repair protein RecF from Lactobacillus acidophilus (strain ATCC 700396 / NCK56 / N2 / NCFM).